Here is a 115-residue protein sequence, read N- to C-terminus: ER exit protein (115 aa).

The protein belongs to the STEEP1 family.

Its function is as follows. May stimulate membrane curvature formation and subsequent endoplasmic reticulum exit site (ERES) establishment. The sequence is that of ER exit protein from Schizosaccharomyces pombe (strain 972 / ATCC 24843) (Fission yeast).